We begin with the raw amino-acid sequence, 469 residues long: Glutamate--tRNA ligase (469 aa).

Positions 9–19 match the 'HIGH' region motif; that stretch reads PSPTGFLHVGG. Cys-98, Cys-100, Cys-125, and Asp-127 together coordinate Zn(2+). A 'KMSKS' region motif is present at residues 236-240; the sequence is KLSKR. Lys-239 provides a ligand contact to ATP.

The protein belongs to the class-I aminoacyl-tRNA synthetase family. Glutamate--tRNA ligase type 1 subfamily. As to quaternary structure, monomer. Requires Zn(2+) as cofactor.

Its subcellular location is the cytoplasm. The catalysed reaction is tRNA(Glu) + L-glutamate + ATP = L-glutamyl-tRNA(Glu) + AMP + diphosphate. Catalyzes the attachment of glutamate to tRNA(Glu) in a two-step reaction: glutamate is first activated by ATP to form Glu-AMP and then transferred to the acceptor end of tRNA(Glu). The protein is Glutamate--tRNA ligase of Shewanella halifaxensis (strain HAW-EB4).